We begin with the raw amino-acid sequence, 357 residues long: Meiotic driver wtf9 (357 aa).

Residues 1–39 form a disordered region; that stretch reads MKNKYYPLRSSMDEMSAKNDNEIDLEKGPLPEYNSEDGS. Residues 11-29 show a composition bias toward basic and acidic residues; that stretch reads SMDEMSAKNDNEIDLEKGP. Transmembrane regions (helical) follow at residues 89-109, 119-139, 149-169, 198-218, 232-252, 256-276, and 286-306; these read LLIS…CVNP, AFFV…FCFF, CIKV…ISLA, VVII…RSKF, CSIS…FWTL, FSGL…TKGL, and ATGY…LFFY.

The protein belongs to the WTF family. In terms of assembly, homomer. Forms protein aggregates. The two isoforms can interact with each other and with themselves. High sequence similarity is required for their interaction.

It localises to the spore membrane. The protein resides in the vacuole membrane. It is found in the ascus epiplasm. Its subcellular location is the cytoplasm. The protein localises to the endoplasmic reticulum membrane. Its function is as follows. Promotes unequal transmission of alleles from the parental zygote to progeny spores by acting as poison/antidote system where the poison and antidote proteins are produced from the same locus; the poison component is trans-acting and targets all spores within an ascus whereas the antidote component is spore-specific, leading to poisoning of all progeny that do not inherit the allele. Functionally, localizes isoform 2 to the vacuole thereby facilitating its degradation. Forms toxic aggregates that disrupt spore maturation. The protein is Meiotic driver wtf9 of Schizosaccharomyces kambucha (Fission yeast).